A 101-amino-acid polypeptide reads, in one-letter code: Small ribosomal subunit protein uS14 (101 aa).

A compositionally biased stretch (basic and acidic residues) spans 1–10; the sequence is MAKKSSIEKN. Residues 1-23 form a disordered region; sequence MAKKSSIEKNNRRKRMTGNAAAK.

It belongs to the universal ribosomal protein uS14 family. Part of the 30S ribosomal subunit. Contacts proteins S3 and S10.

Binds 16S rRNA, required for the assembly of 30S particles and may also be responsible for determining the conformation of the 16S rRNA at the A site. The protein is Small ribosomal subunit protein uS14 of Nitrobacter hamburgensis (strain DSM 10229 / NCIMB 13809 / X14).